The primary structure comprises 656 residues: ATP-dependent zinc metalloprotease FtsH (656 aa).

Residues M1–T45 are Cytoplasmic-facing. Residues G46 to A66 traverse the membrane as a helical segment. The Lumenal portion of the chain corresponds to Q67 to A147. The helical transmembrane segment at V148–L168 threads the bilayer. The Cytoplasmic segment spans residues R169–Q656. An ATP-binding site is contributed by G239–T246. H460 contributes to the Zn(2+) binding site. The active site involves E461. Residues H464 and D538 each coordinate Zn(2+).

It in the central section; belongs to the AAA ATPase family. The protein in the C-terminal section; belongs to the peptidase M41 family. In terms of assembly, homohexamer. It depends on Zn(2+) as a cofactor.

It localises to the cellular thylakoid membrane. Functionally, acts as a processive, ATP-dependent zinc metallopeptidase for both cytoplasmic and membrane proteins. Plays a role in the quality control of integral membrane proteins. The protein is ATP-dependent zinc metalloprotease FtsH of Nostoc sp. (strain PCC 7120 / SAG 25.82 / UTEX 2576).